Here is a 114-residue protein sequence, read N- to C-terminus: Nucleoid-associated protein slr1847 (114 aa).

Belongs to the YbaB/EbfC family. Homodimer.

The protein localises to the cytoplasm. It localises to the nucleoid. Its function is as follows. Binds to DNA and alters its conformation. May be involved in regulation of gene expression, nucleoid organization and DNA protection. The polypeptide is Nucleoid-associated protein slr1847 (Synechocystis sp. (strain ATCC 27184 / PCC 6803 / Kazusa)).